The chain runs to 639 residues: Probable endo-1,3(4)-beta-glucanase ACLA_073210 (639 aa).

The N-terminal stretch at 1–21 (MAPSSLLLSVGSLIASSLASA) is a signal peptide. The 265-residue stretch at 26–290 (IREQSQSYQL…WAGNVFGESG (265 aa)) folds into the GH16 domain. Asn-65 carries N-linked (GlcNAc...) asparagine glycosylation. Glu-146 (nucleophile) is an active-site residue. Residue Glu-151 is the Proton donor of the active site. Disordered stretches follow at residues 337-384 (TVAS…TVAE) and 442-545 (QSSS…GSSI). Polar residues predominate over residues 339-348 (ASPNTASEVH). Low complexity-rich tracts occupy residues 362–376 (PTVPTAAETTVVPPA) and 478–488 (TTTEAVAETET). Ala-617 is lipidated: GPI-anchor amidated alanine. Residues 618-639 (GARKLSVGLSGLVGALAVAALA) constitute a propeptide, removed in mature form.

This sequence belongs to the glycosyl hydrolase 16 family.

The protein resides in the cell membrane. It catalyses the reaction Endohydrolysis of (1-&gt;3)- or (1-&gt;4)-linkages in beta-D-glucans when the glucose residue whose reducing group is involved in the linkage to be hydrolyzed is itself substituted at C-3.. In terms of biological role, mixed-linked glucanase involved in the degradation of complex natural cellulosic substrates. This chain is Probable endo-1,3(4)-beta-glucanase ACLA_073210, found in Aspergillus clavatus (strain ATCC 1007 / CBS 513.65 / DSM 816 / NCTC 3887 / NRRL 1 / QM 1276 / 107).